A 347-amino-acid polypeptide reads, in one-letter code: Protein YIPF1 homolog (347 aa).

The tract at residues 1-115 (MSNYNNKHHD…FSDNVPLNTN (115 aa)) is disordered. The Cytoplasmic segment spans residues 1-166 (MSNYNNKHHD…FFNLIRENPD (166 aa)). Residues 34–47 (NLFPNTNIDYNDYT) are compositionally biased toward polar residues. 2 stretches are compositionally biased toward low complexity: residues 48 to 67 (QNRG…LQFQ) and 76 to 104 (NSNT…SSNN). A compositionally biased stretch (polar residues) spans 105-115 (KFSDNVPLNTN). Residues 167-187 (LYGPFWVLTSLVFIVAVTSNL) traverse the membrane as a helical segment. At 188–207 (NEYFHSSDHKSWEVDIQKIV) the chain is on the lumenal side. A helical transmembrane segment spans residues 208–228 (YSAITIYGYSFVIPLILWGIF). Over 229–232 (KWMN) the chain is Cytoplasmic. A helical membrane pass occupies residues 233-253 (LGLRLLDMLCIYGYTLFIFVP). Residues 254 to 255 (AS) lie on the Lumenal side of the membrane. A helical transmembrane segment spans residues 256 to 276 (ILCVIPLQLVQWIIVAIASIV). Residues 277-296 (SGLFLVTNIFTPLKEDFTKR) lie on the Cytoplasmic side of the membrane. A helical membrane pass occupies residues 297-317 (GLIICAVIGALHIGLALVLKL). Residues 318–347 (YFFANSTENFTISDSSSTPTPTPTNTTKLL) lie on the Lumenal side of the membrane. N-linked (GlcNAc...) asparagine glycosylation is found at Asn322, Asn326, and Asn342.

This sequence belongs to the YIP1 family.

It is found in the golgi apparatus. The protein localises to the cis-Golgi network membrane. Its subcellular location is the trans-Golgi network membrane. The protein resides in the late endosome membrane. This chain is Protein YIPF1 homolog (yipf1), found in Dictyostelium discoideum (Social amoeba).